The chain runs to 100 residues: Insertion element IS600 uncharacterized 11 kDa protein (100 aa).

The protein belongs to the transposase 8 family.

The polypeptide is Insertion element IS600 uncharacterized 11 kDa protein (Shigella sonnei).